The sequence spans 459 residues: Trigger factor (459 aa).

The region spanning 166 to 245 (GDFANIDLTA…VNSVKAEELP (80 aa)) is the PPIase FKBP-type domain.

It belongs to the FKBP-type PPIase family. Tig subfamily.

It is found in the cytoplasm. It carries out the reaction [protein]-peptidylproline (omega=180) = [protein]-peptidylproline (omega=0). In terms of biological role, involved in protein export. Acts as a chaperone by maintaining the newly synthesized protein in an open conformation. Functions as a peptidyl-prolyl cis-trans isomerase. The sequence is that of Trigger factor from Bifidobacterium longum (strain DJO10A).